The primary structure comprises 309 residues: Homoserine O-succinyltransferase (309 aa).

Cys-142 acts as the Acyl-thioester intermediate in catalysis. Substrate-binding residues include Lys-163 and Ser-192. His-235 functions as the Proton acceptor in the catalytic mechanism. Residue Glu-237 is part of the active site. Residue Arg-249 participates in substrate binding.

This sequence belongs to the MetA family. As to quaternary structure, homodimer.

Its subcellular location is the cytoplasm. The catalysed reaction is L-homoserine + succinyl-CoA = O-succinyl-L-homoserine + CoA. Its pathway is amino-acid biosynthesis; L-methionine biosynthesis via de novo pathway; O-succinyl-L-homoserine from L-homoserine: step 1/1. Transfers a succinyl group from succinyl-CoA to L-homoserine, forming succinyl-L-homoserine. The protein is Homoserine O-succinyltransferase of Escherichia coli O139:H28 (strain E24377A / ETEC).